The following is a 594-amino-acid chain: Isocitrate dehydrogenase kinase/phosphatase (594 aa).

Residues 315-321 and Lys-336 each bind ATP; that span reads APGIRGM. Residue Asp-371 is part of the active site.

It belongs to the AceK family.

It localises to the cytoplasm. It carries out the reaction L-seryl-[isocitrate dehydrogenase] + ATP = O-phospho-L-seryl-[isocitrate dehydrogenase] + ADP + H(+). Its function is as follows. Bifunctional enzyme which can phosphorylate or dephosphorylate isocitrate dehydrogenase (IDH) on a specific serine residue. This is a regulatory mechanism which enables bacteria to bypass the Krebs cycle via the glyoxylate shunt in response to the source of carbon. When bacteria are grown on glucose, IDH is fully active and unphosphorylated, but when grown on acetate or ethanol, the activity of IDH declines drastically concomitant with its phosphorylation. This Klebsiella pneumoniae subsp. pneumoniae (strain ATCC 700721 / MGH 78578) protein is Isocitrate dehydrogenase kinase/phosphatase.